The following is a 233-amino-acid chain: 2-C-methyl-D-erythritol 4-phosphate cytidylyltransferase (233 aa).

It belongs to the IspD/TarI cytidylyltransferase family. IspD subfamily.

It catalyses the reaction 2-C-methyl-D-erythritol 4-phosphate + CTP + H(+) = 4-CDP-2-C-methyl-D-erythritol + diphosphate. It functions in the pathway isoprenoid biosynthesis; isopentenyl diphosphate biosynthesis via DXP pathway; isopentenyl diphosphate from 1-deoxy-D-xylulose 5-phosphate: step 2/6. Its function is as follows. Catalyzes the formation of 4-diphosphocytidyl-2-C-methyl-D-erythritol from CTP and 2-C-methyl-D-erythritol 4-phosphate (MEP). This is 2-C-methyl-D-erythritol 4-phosphate cytidylyltransferase from Vibrio atlanticus (strain LGP32) (Vibrio splendidus (strain Mel32)).